A 114-amino-acid chain; its full sequence is Putative antiporter subunit mnhC2 (114 aa).

3 helical membrane passes run 3 to 23 (LILL…ILSI), 28 to 48 (IVIG…SMGT), and 72 to 92 (AIVL…LVLV).

Belongs to the CPA3 antiporters (TC 2.A.63) subunit C family. In terms of assembly, may form a heterooligomeric complex that consists of seven subunits: mnhA2, mnhB2, mnhC2, mnhD2, mnhE2, mnhF2 and mnhG2.

Its subcellular location is the cell membrane. The chain is Putative antiporter subunit mnhC2 (mnhC2) from Staphylococcus aureus (strain MRSA252).